The primary structure comprises 389 residues: Packaging protein 3 (389 aa).

The interval 1–131 (MHPVLRQMKP…VKAEVNFQTT (131 aa)) is interaction with packaging protein 1. The interval 350 to 389 (EKENPDGSVSFQQHERGTQSHENGGHAEPAYSRRQLGRFY) is disordered. A compositionally biased stretch (basic and acidic residues) spans 362–374 (QHERGTQSHENGG).

This sequence belongs to the adenoviridae packaging protein 3 family. In terms of assembly, part of the genome packaging complex composed of packaging proteins 1, 2 and 3; this complex specifically binds to the packaging sequence on the left end of viral genomic DNA and performs packaging of the viral genome. Interacts with hexon-linking protein IIIa; this interaction is required to promote correct genome packaging. In terms of processing, cleaved at different sites by the viral protease during virion maturation.

It is found in the host nucleus. In terms of biological role, involved in viral genome packaging through its interaction with packaging proteins 1 and 2. After proteolytic cleavage by adenovirus protease, L1 52/55k protein is removed from the capsid during viral maturation. This Canine adenovirus serotype 1 (strain CLL) (CAdV-1) protein is Packaging protein 3.